Here is a 329-residue protein sequence, read N- to C-terminus: Phenylalanine--tRNA ligase alpha subunit (329 aa).

A Mg(2+)-binding site is contributed by glutamate 246.

Belongs to the class-II aminoacyl-tRNA synthetase family. Phe-tRNA synthetase alpha subunit type 1 subfamily. As to quaternary structure, tetramer of two alpha and two beta subunits. It depends on Mg(2+) as a cofactor.

The protein localises to the cytoplasm. It catalyses the reaction tRNA(Phe) + L-phenylalanine + ATP = L-phenylalanyl-tRNA(Phe) + AMP + diphosphate + H(+). This is Phenylalanine--tRNA ligase alpha subunit from Helicobacter hepaticus (strain ATCC 51449 / 3B1).